The chain runs to 188 residues: Large ribosomal subunit protein uL5 (188 aa).

The protein belongs to the universal ribosomal protein uL5 family. As to quaternary structure, part of the 50S ribosomal subunit; part of the 5S rRNA/L5/L18/L25 subcomplex. Contacts the 5S rRNA and the P site tRNA. Forms a bridge to the 30S subunit in the 70S ribosome.

Its function is as follows. This is one of the proteins that bind and probably mediate the attachment of the 5S RNA into the large ribosomal subunit, where it forms part of the central protuberance. In the 70S ribosome it contacts protein S13 of the 30S subunit (bridge B1b), connecting the 2 subunits; this bridge is implicated in subunit movement. Contacts the P site tRNA; the 5S rRNA and some of its associated proteins might help stabilize positioning of ribosome-bound tRNAs. The chain is Large ribosomal subunit protein uL5 from Aquifex aeolicus (strain VF5).